The sequence spans 416 residues: Nonsense-mediated decay protein 4 (416 aa).

3 disordered regions span residues 1–21, 195–218, and 356–393; these read MSLY…NYHD, QHPI…YNNS, and DRPS…ANGD. The segment covering 12-21 has biased composition (basic and acidic residues); the sequence is EARKNSNYHD. Residues 360-375 show a composition bias toward basic residues; sequence KSKNKNKNKNTKKSTK.

It localises to the cytoplasm. In terms of biological role, involved in nonsense-mediated decay of mRNAs containing premature stop codons. In Debaryomyces hansenii (strain ATCC 36239 / CBS 767 / BCRC 21394 / JCM 1990 / NBRC 0083 / IGC 2968) (Yeast), this protein is Nonsense-mediated decay protein 4 (NMD4).